Here is a 408-residue protein sequence, read N- to C-terminus: MSSVFETLKERGYIAQLTHEEKIKELLEKEKITFYIGFDPTADSLHVGHFLQMMVMAHMQKAGHRPIALIGGGTAMVGDPTGRTDMRKMMTREEIKHNADCFKKQLSKFIEFGEGKAIMVDNADWLLDLNYIEFLRDIGVHFSVNRMLTAECFKSRLERGLSFIEFNYMLMQSYDFLKLYKEYGCIMQLGGDDQWSNILGGIDLIRRKEGKEVYGMTFTLLTTSEGKKMGKTEKGALWLDANKTSPYEFYQYWRNIHDADVIKCLKLLTFVPMEEIEEYAKLKDQEINIAKKRLAFEVTKLIHGEEEALNAQKTAEALFEKGASTDNMPTTEVASGELSNGINIIDLLLKTKLIPSKGEGRRLIEQGGISVNDVRVEGFDRLVTMDDFNNGELIIKKGKKTYHRVKLV.

Position 35 (Y35) interacts with L-tyrosine. The 'HIGH' region motif lies at 40-49; the sequence is PTADSLHVGH. Y168 and Q172 together coordinate L-tyrosine. The 'KMSKS' region signature appears at 228-232; the sequence is KMGKT. Position 231 (K231) interacts with ATP. The S4 RNA-binding domain occupies 342–407; the sequence is INIIDLLLKT…GKKTYHRVKL (66 aa).

Belongs to the class-I aminoacyl-tRNA synthetase family. TyrS type 1 subfamily. Homodimer.

The protein resides in the cytoplasm. It catalyses the reaction tRNA(Tyr) + L-tyrosine + ATP = L-tyrosyl-tRNA(Tyr) + AMP + diphosphate + H(+). In terms of biological role, catalyzes the attachment of tyrosine to tRNA(Tyr) in a two-step reaction: tyrosine is first activated by ATP to form Tyr-AMP and then transferred to the acceptor end of tRNA(Tyr). This Acetivibrio thermocellus (strain ATCC 27405 / DSM 1237 / JCM 9322 / NBRC 103400 / NCIMB 10682 / NRRL B-4536 / VPI 7372) (Clostridium thermocellum) protein is Tyrosine--tRNA ligase.